The chain runs to 341 residues: Methionine import ATP-binding protein MetN (341 aa).

The ABC transporter domain maps to 2 to 241 (INLQDVSKVY…PKEQMTKRFV (240 aa)). 38–45 (GYSGAGKS) lines the ATP pocket.

It belongs to the ABC transporter superfamily. Methionine importer (TC 3.A.1.24) family. As to quaternary structure, the complex is composed of two ATP-binding proteins (MetN), two transmembrane proteins (MetP) and a solute-binding protein (MetQ).

It localises to the cell membrane. It catalyses the reaction L-methionine(out) + ATP + H2O = L-methionine(in) + ADP + phosphate + H(+). The catalysed reaction is D-methionine(out) + ATP + H2O = D-methionine(in) + ADP + phosphate + H(+). In terms of biological role, part of the ABC transporter complex MetNPQ involved in methionine import. Responsible for energy coupling to the transport system. It has also been shown to be involved in methionine sulfoxide transport. The chain is Methionine import ATP-binding protein MetN from Bacillus subtilis (strain 168).